We begin with the raw amino-acid sequence, 271 residues long: 3-methyl-2-oxobutanoate hydroxymethyltransferase (271 aa).

Mg(2+) contacts are provided by aspartate 51 and aspartate 90. Residues 51–52, aspartate 90, and lysine 118 each bind 3-methyl-2-oxobutanoate; that span reads DS. Glutamate 120 contributes to the Mg(2+) binding site. Glutamate 186 functions as the Proton acceptor in the catalytic mechanism.

This sequence belongs to the PanB family. In terms of assembly, homodecamer; pentamer of dimers. Mg(2+) is required as a cofactor.

The protein resides in the cytoplasm. The enzyme catalyses 3-methyl-2-oxobutanoate + (6R)-5,10-methylene-5,6,7,8-tetrahydrofolate + H2O = 2-dehydropantoate + (6S)-5,6,7,8-tetrahydrofolate. Its pathway is cofactor biosynthesis; (R)-pantothenate biosynthesis; (R)-pantoate from 3-methyl-2-oxobutanoate: step 1/2. Its function is as follows. Catalyzes the reversible reaction in which hydroxymethyl group from 5,10-methylenetetrahydrofolate is transferred onto alpha-ketoisovalerate to form ketopantoate. The chain is 3-methyl-2-oxobutanoate hydroxymethyltransferase from Xanthomonas oryzae pv. oryzae (strain PXO99A).